Consider the following 371-residue polypeptide: Histidinol-phosphate aminotransferase (371 aa).

Lys-228 bears the N6-(pyridoxal phosphate)lysine mark.

The protein belongs to the class-II pyridoxal-phosphate-dependent aminotransferase family. Histidinol-phosphate aminotransferase subfamily. In terms of assembly, homodimer. Requires pyridoxal 5'-phosphate as cofactor.

It catalyses the reaction L-histidinol phosphate + 2-oxoglutarate = 3-(imidazol-4-yl)-2-oxopropyl phosphate + L-glutamate. It participates in amino-acid biosynthesis; L-histidine biosynthesis; L-histidine from 5-phospho-alpha-D-ribose 1-diphosphate: step 7/9. The chain is Histidinol-phosphate aminotransferase from Thermosynechococcus vestitus (strain NIES-2133 / IAM M-273 / BP-1).